The following is a 164-amino-acid chain: Polygalacturonase (164 aa).

The protein belongs to the glycosyl hydrolase 28 family.

It is found in the secreted. It localises to the cell wall. The enzyme catalyses (1,4-alpha-D-galacturonosyl)n+m + H2O = (1,4-alpha-D-galacturonosyl)n + (1,4-alpha-D-galacturonosyl)m.. This Cupressus sempervirens (Italian cypress) protein is Polygalacturonase.